We begin with the raw amino-acid sequence, 98 residues long: Tan_12Cys (98 aa).

A signal peptide spans 1–21; sequence MNLKVLFLLAMVLVTLCLGED. Residues 22 to 28 constitute a propeptide that is removed on maturation; sequence RVTDRRK.

The protein belongs to the teretoxin C (TC) superfamily. Post-translationally, contains 6 disulfide bonds. In terms of tissue distribution, expressed by the venom duct.

It is found in the secreted. In Terebra anilis (Auger snail), this protein is Tan_12Cys.